The primary structure comprises 101 residues: Large ribosomal subunit protein eL36 (101 aa).

Disordered regions lie at residues 1-31 and 75-101; these read MGEI…GFLS and GTHM…SKGE.

It belongs to the eukaryotic ribosomal protein eL36 family.

This chain is Large ribosomal subunit protein eL36 (RL36), found in Ulva compressa (Green alga).